A 155-amino-acid polypeptide reads, in one-letter code: uncharacterized protein (155 aa).

Disordered regions lie at residues 24 to 63 and 80 to 155; these read RVGY…VVLK and KAAK…DENE. Residues 43–56 show a composition bias toward acidic residues; sequence PDEDGNESDKEDEQ. Serine 50 bears the Phosphoserine mark. Position 108 is an N6-acetyllysine (lysine 108). The segment covering 128-147 has biased composition (polar residues); the sequence is KQSPVRKNSQKQIKNSSLLS. 3 positions are modified to phosphoserine: serine 130, serine 147, and serine 150.

This is an uncharacterized protein from Rattus norvegicus (Rat).